The following is a 374-amino-acid chain: Type IV secretion system protein PtlG homolog (374 aa).

Residues 38–56 (WMFALVAVALSCLLATGIW) traverse the membrane as a helical segment. Positions 86–117 (HPREPEPAPLPDMPAAPDPILPQPRPAPPVPP) are disordered. Residues 92 to 117 (PAPLPDMPAAPDPILPQPRPAPPVPP) are compositionally biased toward pro residues.

It belongs to the TrbI/VirB10 family.

It localises to the cell membrane. This is Type IV secretion system protein PtlG homolog (ptlG) from Bordetella bronchiseptica (strain ATCC BAA-588 / NCTC 13252 / RB50) (Alcaligenes bronchisepticus).